A 634-amino-acid polypeptide reads, in one-letter code: Glutamyl-tRNA(Gln) amidotransferase subunit E (634 aa).

This sequence belongs to the GatB/GatE family. GatE subfamily. In terms of assembly, heterodimer of GatD and GatE.

The enzyme catalyses L-glutamyl-tRNA(Gln) + L-glutamine + ATP + H2O = L-glutaminyl-tRNA(Gln) + L-glutamate + ADP + phosphate + H(+). Functionally, allows the formation of correctly charged Gln-tRNA(Gln) through the transamidation of misacylated Glu-tRNA(Gln) in organisms which lack glutaminyl-tRNA synthetase. The reaction takes place in the presence of glutamine and ATP through an activated gamma-phospho-Glu-tRNA(Gln). The GatDE system is specific for glutamate and does not act on aspartate. The chain is Glutamyl-tRNA(Gln) amidotransferase subunit E from Sulfolobus acidocaldarius (strain ATCC 33909 / DSM 639 / JCM 8929 / NBRC 15157 / NCIMB 11770).